A 110-amino-acid chain; its full sequence is UPF0339 protein YegP (110 aa).

A run of 2 repeats spans residues 10–58 (SSDS…RYEK) and 61–109 (ASNG…VKDN).

This sequence belongs to the UPF0339 family. Duplicated subfamily.

In Escherichia coli O157:H7, this protein is UPF0339 protein YegP (yegP).